A 218-amino-acid polypeptide reads, in one-letter code: Protein Nef (218 aa).

A disordered region spans residues 1–44 (MGGKWSKMAGWSTVRERMRRAEPARERMRRAEPRAEPAADGVGA). A lipid anchor (N-myristoyl glycine; by host) is attached at Gly-2. Ser-6 is subject to Phosphoserine; by host. The segment covering 14–37 (VRERMRRAEPARERMRRAEPRAEP) has biased composition (basic and acidic residues). The tract at residues 74-77 (EDEE) is acidic; interacts with host PACS1 and PACS2; stabilizes the interaction of NEF/MHC-I with host AP1M1; necessary for MHC-I internalization. The tract at residues 81–90 (PVKPQVPLRP) is SH3-binding; interaction with Src family tyrosine kinases. The PxxP; stabilizes the interaction of NEF/MHC-I with host AP1M1; necessary for MHC-I internalization motif lies at 84–87 (PQVP). The interval 120 to 136 (DILDLWVYHTQGYFPDW) is mediates dimerization, Nef-PTE1 interaction. Residues 160–192 (VEPEKIEEANEGENNSLLHPMSQHGMDDPEREV) form a binding to ATP6V1H region. Residues 176 to 177 (LL) carry the Dileucine internalization motif; necessary for CD4 internalization motif. The Diacidic; necessary for CD4 internalization signature appears at 186-187 (DD).

It belongs to the lentivirus primate group Nef protein family. In terms of assembly, monomer; cytosolic form. Homodimer; membrane bound form. Interacts with Nef associated p21-activated kinase (PAK2); this interaction activates PAK2. Associates with the Nef-MHC-I-AP1 complex; this complex is required for MHC-I internalization. Interacts (via C-terminus) with host PI3-kinase. Interacts with host PACS1; this interaction seems to be weak. Interacts with host PACS2. Interacts with host LCK and MAPK3; these interactions inhibit the kinase activity of the latter. Interacts with host ATP6V1H; this interaction may play a role in CD4 endocytosis. Associates with the CD4-Nef-AP2 complex; this complex is required for CD4 internalization. Interacts with host AP2 subunit alpha and AP2 subunit sigma2. Interacts with TCR-zeta chain; this interaction up-regulates the Fas ligand (FasL) surface expression. Interacts with host HCK, LYN, and SRC; these interactions activate the Src family kinases. Interacts with MAP3K5; this interaction inhibits the Fas and TNFR-mediated death signals. Interacts with beta-COP and PTE1. Interacts with human RACK1; this increases Nef phosphorylation by PKC. Interacts with TP53; this interaction decreases the half-life of TP53, protecting the infected cell against p53-mediated apoptosis. The virion-associated Nef proteins are cleaved by the viral protease to release the soluble C-terminal core protein. Nef is probably cleaved concomitantly with viral structural proteins on maturation of virus particles. Post-translationally, myristoylated. In terms of processing, phosphorylated on serine residues, probably by host PKCdelta and theta.

It localises to the host cell membrane. Its subcellular location is the virion. The protein resides in the secreted. It is found in the host Golgi apparatus membrane. Functionally, factor of infectivity and pathogenicity, required for optimal virus replication. Alters numerous pathways of T-lymphocyte function and down-regulates immunity surface molecules in order to evade host defense and increase viral infectivity. Alters the functionality of other immunity cells, like dendritic cells, monocytes/macrophages and NK cells. Its function is as follows. In infected CD4(+) T-lymphocytes, down-regulates the surface MHC-I, mature MHC-II, CD4, CD28, CCR5 and CXCR4 molecules. Mediates internalization and degradation of host CD4 through the interaction of with the cytoplasmic tail of CD4, the recruitment of AP-2 (clathrin adapter protein complex 2), internalization through clathrin coated pits, and subsequent transport to endosomes and lysosomes for degradation. Diverts host MHC-I molecules to the trans-Golgi network-associated endosomal compartments by an endocytic pathway to finally target them for degradation. MHC-I down-regulation may involve AP-1 (clathrin adapter protein complex 1) or possibly Src family kinase-ZAP70/Syk-PI3K cascade recruited by PACS2. In consequence infected cells are masked for immune recognition by cytotoxic T-lymphocytes. Decreasing the number of immune receptors also prevents reinfection by more HIV particles (superinfection). Down-regulates host SERINC3 and SERINC5 thereby excluding these proteins from the viral particles. Virion infectivity is drastically higher when SERINC3 or SERINC5 are excluded from the viral envelope, because these host antiviral proteins impair the membrane fusion event necessary for subsequent virion penetration. Bypasses host T-cell signaling by inducing a transcriptional program nearly identical to that of anti-CD3 cell activation. Interaction with TCR-zeta chain up-regulates the Fas ligand (FasL). Increasing surface FasL molecules and decreasing surface MHC-I molecules on infected CD4(+) cells send attacking cytotoxic CD8+ T-lymphocytes into apoptosis. In terms of biological role, plays a role in optimizing the host cell environment for viral replication without causing cell death by apoptosis. Protects the infected cells from apoptosis in order to keep them alive until the next virus generation is ready to strike. Inhibits the Fas and TNFR-mediated death signals by blocking MAP3K5/ASK1. Decreases the half-life of TP53, protecting the infected cell against p53-mediated apoptosis. Inhibits the apoptotic signals regulated by the Bcl-2 family proteins through the formation of a Nef/PI3-kinase/PAK2 complex that leads to activation of PAK2 and induces phosphorylation of host BAD. Functionally, extracellular Nef protein targets CD4(+) T-lymphocytes for apoptosis by interacting with CXCR4 surface receptors. This Homo sapiens (Human) protein is Protein Nef.